The chain runs to 86 residues: Gas vesicle protein A1 (86 aa).

Belongs to the gas vesicle GvpA family. In terms of assembly, the gas vesicle shell is 2 nm thick and consists of a single layer of this protein. It forms helical ribs nearly perpendicular to the long axis of the vesicle.

The protein resides in the gas vesicle shell. Functionally, gas vesicles are hollow, gas filled proteinaceous nanostructures found in some microorganisms. During planktonic growth they allow positioning of the organism at a favorable depth for light or nutrient acquisition. GvpA forms the protein shell. It is not clear if the 2 type A proteins in this organism are functionally redundant. In terms of biological role, when the full gvp locus (gvpA1-gvpP-gvpQ-gvpA2-gvpR-gvpN-gvpF-gvpG-gvpL-gvpS-gvpK-gvpJ-gvpT-gvpU, called pNL26) is expressed in E.coli gas vesicles are made. In Priestia megaterium (Bacillus megaterium), this protein is Gas vesicle protein A1.